The chain runs to 76 residues: MKRERGRRPRKRVCSFCVDKVESIDYKDTHKIRKYITERGKILPRRISGNCAKHQRQVTVAIKRARHIALLPYIVE.

This sequence belongs to the bacterial ribosomal protein bS18 family. In terms of assembly, part of the 30S ribosomal subunit. Forms a tight heterodimer with protein bS6.

In terms of biological role, binds as a heterodimer with protein bS6 to the central domain of the 16S rRNA, where it helps stabilize the platform of the 30S subunit. This Desulfitobacterium hafniense (strain Y51) protein is Small ribosomal subunit protein bS18.